The chain runs to 379 residues: Isocitrate dehydrogenase [NAD] subunit 2, mitochondrial (379 aa).

The N-terminal 27 residues, 1-27 (MSMLSTLRTAGSLRTFSRSACYSFQRF), are a transit peptide targeting the mitochondrion. Substrate is bound by residues R129, R139, R160, and D247. 3 residues coordinate Mg(2+): D247, D273, and D277.

It belongs to the isocitrate and isopropylmalate dehydrogenases family. Octamer of two non-identical subunits IDH1 and IDH2. The cofactor is Mg(2+). Requires Mn(2+) as cofactor.

The protein resides in the mitochondrion. The enzyme catalyses D-threo-isocitrate + NAD(+) = 2-oxoglutarate + CO2 + NADH. In terms of biological role, performs an essential role in the oxidative function of the citric acid cycle and is involved in glutamate biosynthesis. Also binds RNA; specifically to the 5'-untranslated leaders of mitochondrial mRNAs. This Schizosaccharomyces pombe (strain 972 / ATCC 24843) (Fission yeast) protein is Isocitrate dehydrogenase [NAD] subunit 2, mitochondrial (idh2).